The primary structure comprises 322 residues: Homoserine kinase (322 aa).

106–116 (ALSSGMGGSAA) contacts ATP.

This sequence belongs to the GHMP kinase family. Homoserine kinase subfamily.

The protein localises to the cytoplasm. It catalyses the reaction L-homoserine + ATP = O-phospho-L-homoserine + ADP + H(+). Its pathway is amino-acid biosynthesis; L-threonine biosynthesis; L-threonine from L-aspartate: step 4/5. Catalyzes the ATP-dependent phosphorylation of L-homoserine to L-homoserine phosphate. The chain is Homoserine kinase from Xanthomonas campestris pv. campestris (strain B100).